The chain runs to 539 residues: T-complex protein 1 subunit zeta (539 aa).

This sequence belongs to the TCP-1 chaperonin family. In terms of assembly, heterooligomeric complex of about 850 to 900 kDa that forms two stacked rings, 12 to 16 nm in diameter.

The protein localises to the cytoplasm. Functionally, molecular chaperone; assists the folding of proteins upon ATP hydrolysis. Known to play a role, in vitro, in the folding of actin and tubulin. The protein is T-complex protein 1 subunit zeta (cct-6) of Caenorhabditis elegans.